We begin with the raw amino-acid sequence, 134 residues long: ATP synthase epsilon chain, chloroplastic (134 aa).

The protein belongs to the ATPase epsilon chain family. In terms of assembly, F-type ATPases have 2 components, CF(1) - the catalytic core - and CF(0) - the membrane proton channel. CF(1) has five subunits: alpha(3), beta(3), gamma(1), delta(1), epsilon(1). CF(0) has three main subunits: a, b and c.

Its subcellular location is the plastid. It is found in the chloroplast thylakoid membrane. Produces ATP from ADP in the presence of a proton gradient across the membrane. This is ATP synthase epsilon chain, chloroplastic from Amborella trichopoda.